Here is a 175-residue protein sequence, read N- to C-terminus: Regenerating islet-derived protein 3-beta (175 aa).

The signal sequence occupies residues 1-26; the sequence is MLPPTACSVMSWMLLSCLMLLSQVQG. A propeptide spanning residues 27 to 37 is cleaved from the precursor; sequence EDSLKNIPSAR. Disulfide bonds link cysteine 40–cysteine 51, cysteine 68–cysteine 171, and cysteine 146–cysteine 163. One can recognise a C-type lectin domain in the interval 47–172; that stretch reads YGSYCYALFQ…CEVKLPYVCK (126 aa). Histidine 107 serves as a coordination point for Zn(2+). Residues 114–116 carry the EPN motif; sequence EPN. A Zn(2+)-binding site is contributed by glutamate 121.

As to quaternary structure, forms a hexameric membrane-permeabilizing oligomeric pore on membrane phospholipids. The hexamer is formed by three dimers related by helical symmetry. Forms filaments, filamentation traps pore complexes and limits damage to host cells. Interacts with EXTL3. Proteolytic processing by trypsin removes an inhibitory N-terminal propeptide and is essential for peptidoglycan binding and antibacterial activity. In terms of tissue distribution, constitutively expressed in the small intestine, moderately in colon and at an extremely low level in healthy pancreas.

It localises to the secreted. Its activity is regulated as follows. Lipopolysaccharide inhibits pore-forming activity, explaining why is bactericidal for Gram-positive but not Gram-negative bacteria. Functionally, bactericidal C-type lectin which acts against several intestinal Gram-positive and Gram-negative bacteria. Lacks antibacterial activity against S.typhimurium. May play a role in protection against infection with S.enteritidis by inhibiting its translocation from the gut lumen into intestinal tissues and further extraintestinal tissues. Its function is as follows. Acts as a hormone in response to different stimuli. Secreted by different cell types to activate its receptor EXTL3 and induce cell specific signaling pathways. In pancreas, is able stimulate cell proliferation. The polypeptide is Regenerating islet-derived protein 3-beta (Mus musculus (Mouse)).